The sequence spans 930 residues: Translation initiation factor IF-2 (930 aa).

Disordered stretches follow at residues 160–179 (EPVEAAVDTSAPTRFSFTDG) and 208–301 (AKRA…AAAP). Positions 208-227 (AKRAAEEAKRTQPRAEKPAD) are enriched in basic and acidic residues. Basic residues-rich tracts occupy residues 263–272 (GHGHKKHHHG) and 288–301 (KRGAGKAVKKAAAP). Residues 431-600 (TRAPVVTVMG…SLQAEVLELT (170 aa)) enclose the tr-type G domain. The tract at residues 440 to 447 (GHVDHGKT) is G1. Residue 440–447 (GHVDHGKT) participates in GTP binding. The interval 465–469 (GITQH) is G2. The G3 stretch occupies residues 486–489 (DTPG). GTP is bound by residues 486-490 (DTPGH) and 540-543 (NKCD). The segment at 540-543 (NKCD) is G4. Positions 576 to 578 (SAH) are G5.

The protein belongs to the TRAFAC class translation factor GTPase superfamily. Classic translation factor GTPase family. IF-2 subfamily.

The protein localises to the cytoplasm. One of the essential components for the initiation of protein synthesis. Protects formylmethionyl-tRNA from spontaneous hydrolysis and promotes its binding to the 30S ribosomal subunits. Also involved in the hydrolysis of GTP during the formation of the 70S ribosomal complex. The chain is Translation initiation factor IF-2 from Cellvibrio japonicus (strain Ueda107) (Pseudomonas fluorescens subsp. cellulosa).